We begin with the raw amino-acid sequence, 378 residues long: Biotin synthase (378 aa).

The 225-residue stretch at 68–292 (NEVQISTLLS…IAVTRICCPS (225 aa)) folds into the Radical SAM core domain. Residues C83, C87, and C90 each coordinate [4Fe-4S] cluster. Residues C129, C160, C220, and R296 each contribute to the [2Fe-2S] cluster site.

It belongs to the radical SAM superfamily. Biotin synthase family. Homodimer. Requires [4Fe-4S] cluster as cofactor. [2Fe-2S] cluster is required as a cofactor.

The enzyme catalyses (4R,5S)-dethiobiotin + (sulfur carrier)-SH + 2 reduced [2Fe-2S]-[ferredoxin] + 2 S-adenosyl-L-methionine = (sulfur carrier)-H + biotin + 2 5'-deoxyadenosine + 2 L-methionine + 2 oxidized [2Fe-2S]-[ferredoxin]. It participates in cofactor biosynthesis; biotin biosynthesis; biotin from 7,8-diaminononanoate: step 2/2. Catalyzes the conversion of dethiobiotin (DTB) to biotin by the insertion of a sulfur atom into dethiobiotin via a radical-based mechanism. The chain is Biotin synthase from Psychrobacter arcticus (strain DSM 17307 / VKM B-2377 / 273-4).